Here is a 328-residue protein sequence, read N- to C-terminus: Peroxidase 25 (328 aa).

Positions 1–26 are cleaved as a signal peptide; the sequence is MGVYLGKYCYIMIIMLVLVLGKEVRS. Cystine bridges form between Cys38–Cys114, Cys71–Cys76, Cys120–Cys324, and Cys198–Cys230. His69 functions as the Proton acceptor in the catalytic mechanism. Residues Asp70, Val73, Gly75, Asp77, and Ser79 each contribute to the Ca(2+) site. Pro161 lines the substrate pocket. His191 provides a ligand contact to heme b. Thr192 serves as a coordination point for Ca(2+). Asn207 is a glycosylation site (N-linked (GlcNAc...) asparagine). Residues Asp243, Ser246, and Asp251 each coordinate Ca(2+).

This sequence belongs to the peroxidase family. Classical plant (class III) peroxidase subfamily. It depends on heme b as a cofactor. Ca(2+) serves as cofactor.

The protein resides in the secreted. It carries out the reaction 2 a phenolic donor + H2O2 = 2 a phenolic radical donor + 2 H2O. Its function is as follows. Removal of H(2)O(2), oxidation of toxic reductants, biosynthesis and degradation of lignin, suberization, auxin catabolism, response to environmental stresses such as wounding, pathogen attack and oxidative stress. These functions might be dependent on each isozyme/isoform in each plant tissue. The polypeptide is Peroxidase 25 (PER25) (Arabidopsis thaliana (Mouse-ear cress)).